The sequence spans 37 residues: Large ribosomal subunit protein bL36 (37 aa).

Belongs to the bacterial ribosomal protein bL36 family.

This Synechococcus sp. (strain WH7803) protein is Large ribosomal subunit protein bL36.